Reading from the N-terminus, the 134-residue chain is Nogalonic acid methyl ester cyclase (134 aa).

Residue Gln-95 coordinates nogalaviketone. The Proton donor/acceptor role is filled by Asp-111.

It belongs to the polyketide cyclase DnrD family. Homotetramer. Dimer of dimers.

The enzyme catalyses nogalaviketone = methyl nogalonate. Its pathway is antibiotic biosynthesis. Involved in the biosynthesis of the aromatic polyketide antibiotic nogalamycin. Catalyzes the formation of nogalaviketone from nogalonic acid methyl ester (NAME), the last ring-closure step in the biosynthesis of nogalamycin. This Streptomyces nogalater protein is Nogalonic acid methyl ester cyclase.